The chain runs to 269 residues: Shikimate dehydrogenase (NADP(+)) (269 aa).

Shikimate contacts are provided by residues 17 to 19 (SKS) and Thr-64. Residue Lys-68 is the Proton acceptor of the active site. Residue Glu-80 participates in NADP(+) binding. Shikimate contacts are provided by Asn-89 and Asp-105. Residues 130 to 134 (GAGGA), 154 to 159 (NRTRAK), and Met-213 contribute to the NADP(+) site. Shikimate is bound at residue Tyr-215. NADP(+) is bound at residue Gly-237.

It belongs to the shikimate dehydrogenase family. As to quaternary structure, homodimer.

The enzyme catalyses shikimate + NADP(+) = 3-dehydroshikimate + NADPH + H(+). The protein operates within metabolic intermediate biosynthesis; chorismate biosynthesis; chorismate from D-erythrose 4-phosphate and phosphoenolpyruvate: step 4/7. Its function is as follows. Involved in the biosynthesis of the chorismate, which leads to the biosynthesis of aromatic amino acids. Catalyzes the reversible NADPH linked reduction of 3-dehydroshikimate (DHSA) to yield shikimate (SA). This chain is Shikimate dehydrogenase (NADP(+)), found in Neisseria meningitidis serogroup C / serotype 2a (strain ATCC 700532 / DSM 15464 / FAM18).